We begin with the raw amino-acid sequence, 344 residues long: Probable glucan endo-1,3-beta-glucosidase At4g16260 (344 aa).

The signal sequence occupies residues 1 to 21; sequence MTTLFLLIALFITTILNPTSG. Residue Glu116 is the Proton donor of the active site. Catalysis depends on Glu257, which acts as the Nucleophile.

It belongs to the glycosyl hydrolase 17 family. In terms of assembly, (Microbial infection) Interacts with the 30C02 effector protein (AC G3GD54) of the beet cyst nematode Heterodera schachtii. Interaction with the 30C02 effector protein may potentially suppress beta-1,3-glucanase activity and plant defense.

Its subcellular location is the secreted. The catalysed reaction is Hydrolysis of (1-&gt;3)-beta-D-glucosidic linkages in (1-&gt;3)-beta-D-glucans.. In terms of biological role, may be involved in plant defense against cyst nematode pathogens. This chain is Probable glucan endo-1,3-beta-glucosidase At4g16260, found in Arabidopsis thaliana (Mouse-ear cress).